The chain runs to 575 residues: Regulatory protein zeste (575 aa).

A compositionally biased stretch (gly residues) spans methionine 1 to alanine 26. Disordered regions lie at residues methionine 1 to threonine 53 and serine 151 to glutamate 174. The tract at residues serine 2 to lysine 47 is hydrophobic. A compositionally biased stretch (polar residues) spans threonine 31–proline 51. The DNA-binding element occupies asparagine 48 to tyrosine 128. Over residues serine 151–histidine 164 the composition is skewed to low complexity.

In terms of assembly, self-associates forming complexes of several hundred monomers.

The protein localises to the nucleus. In terms of biological role, involved in transvection phenomena (= synapsis-dependent gene expression), where the synaptic pairing of chromosomes carrying genes with which zeste interacts influences the expression of these genes. Zeste binds to DNA and stimulates transcription from a nearby promoter. The sequence is that of Regulatory protein zeste (z) from Drosophila melanogaster (Fruit fly).